The chain runs to 1369 residues: Mediator of RNA polymerase II transcription subunit 23 (1369 aa).

Positions 1337–1369 (TESAAPPPPPMNSGSPAPQPNQVPVSVPLTVTQ) are disordered. Over residues 1341–1357 (APPPPPMNSGSPAPQPN) the composition is skewed to pro residues.

Belongs to the Mediator complex subunit 23 family. In terms of assembly, component of the Mediator complex.

The protein localises to the nucleus. Functionally, component of the Mediator complex, a coactivator involved in the regulated transcription of nearly all RNA polymerase II-dependent genes. Mediator functions as a bridge to convey information from gene-specific regulatory proteins to the basal RNA polymerase II transcription machinery. Mediator is recruited to promoters by direct interactions with regulatory proteins and serves as a scaffold for the assembly of a functional preinitiation complex with RNA polymerase II and the general transcription factors. The sequence is that of Mediator of RNA polymerase II transcription subunit 23 (med23) from Xenopus laevis (African clawed frog).